The chain runs to 386 residues: 2-deoxy-scyllo-inosose synthase (386 aa).

NAD(+) contacts are provided by residues Asp-42, 73–76 (EEHK), 105–109 (GVTGN), 129–130 (TT), 140–142 (SLK), and 151–152 (KN). Lys-142 is a catalytic residue. Position 184 (Glu-184) interacts with Co(2+). The active site involves Glu-244. Positions 247 and 263 each coordinate Co(2+).

The protein belongs to the sugar phosphate cyclases superfamily. DOI synthase family. Requires NAD(+) as cofactor. Co(2+) is required as a cofactor.

It carries out the reaction D-glucose 6-phosphate = 2-deoxy-L-scyllo-inosose + phosphate. The protein operates within metabolic intermediate biosynthesis; 2-deoxystreptamine biosynthesis; 2-deoxystreptamine from D-glucose 6-phosphate: step 1/4. It participates in antibiotic biosynthesis; tobramycin biosynthesis. In terms of biological role, catalyzes the intramolecular carbocycle formation from D-glucose-6-phosphate to 2-deoxy-scyllo-inosose (DOI). The protein is 2-deoxy-scyllo-inosose synthase (tbmA) of Streptoalloteichus tenebrarius (strain ATCC 17920 / DSM 40477 / JCM 4838 / CBS 697.72 / NBRC 16177 / NCIMB 11028 / NRRL B-12390 / A12253. 1 / ISP 5477) (Streptomyces tenebrarius).